We begin with the raw amino-acid sequence, 83 residues long: uncharacterized protein (83 aa).

Belongs to the UPF0440 family.

This is an uncharacterized protein from Natronomonas pharaonis (strain ATCC 35678 / DSM 2160 / CIP 103997 / JCM 8858 / NBRC 14720 / NCIMB 2260 / Gabara) (Halobacterium pharaonis).